We begin with the raw amino-acid sequence, 461 residues long: Cysteine--tRNA ligase (461 aa).

Residue cysteine 27 coordinates Zn(2+). Positions 29 to 39 (ITVYDYCHIGH) match the 'HIGH' region motif. Cysteine 208, histidine 233, and glutamate 237 together coordinate Zn(2+). The 'KMSKS' region signature appears at 265–269 (KMSKS). Lysine 268 is a binding site for ATP.

Belongs to the class-I aminoacyl-tRNA synthetase family. Monomer. It depends on Zn(2+) as a cofactor.

It is found in the cytoplasm. The enzyme catalyses tRNA(Cys) + L-cysteine + ATP = L-cysteinyl-tRNA(Cys) + AMP + diphosphate. This chain is Cysteine--tRNA ligase, found in Chromohalobacter salexigens (strain ATCC BAA-138 / DSM 3043 / CIP 106854 / NCIMB 13768 / 1H11).